A 447-amino-acid polypeptide reads, in one-letter code: Rab GDP dissociation inhibitor alpha (447 aa).

S427 is modified (phosphoserine).

Belongs to the Rab GDI family. Interacts with RHOH. Interacts with the non-phosphorylated forms of RAB1A, RAB3A, RAB5A, RAB5B, RAB5C, RAB8A, RAB8B, RAB12, RAB35, and RAB43. Interacts with RAB10. In terms of tissue distribution, high expression in brain, lower in other tissues.

Its subcellular location is the cytoplasm. It localises to the golgi apparatus. It is found in the trans-Golgi network. In terms of biological role, regulates the GDP/GTP exchange reaction of most Rab proteins by inhibiting the dissociation of GDP from them, and the subsequent binding of GTP to them. Promotes the dissociation of GDP-bound Rab proteins from the membrane and inhibits their activation. Promotes the dissociation of RAB1A, RAB3A, RAB5A and RAB10 from membranes. In Mus musculus (Mouse), this protein is Rab GDP dissociation inhibitor alpha (Gdi1).